Reading from the N-terminus, the 213-residue chain is Adenylate kinase (213 aa).

Residue 10–15 coordinates ATP; that stretch reads GSGKGT. The tract at residues 30–59 is NMP; that stretch reads STGDMLRTTVNKESVLGKNIQAIIKLGNLV. AMP contacts are provided by residues threonine 31, arginine 36, 57–59, 85–88, and glutamine 92; these read NLV and GFPR. Residues 122-159 form an LID region; it reads GRMVHEPSGRIYHVTFNPPKQKGKDDITGENLIIRQDD. Residues arginine 123 and 132–133 each bind ATP; that span reads IY. AMP is bound by residues arginine 156 and arginine 167. Cysteine 199 serves as a coordination point for ATP.

This sequence belongs to the adenylate kinase family. As to quaternary structure, monomer.

The protein resides in the cytoplasm. It carries out the reaction AMP + ATP = 2 ADP. Its pathway is purine metabolism; AMP biosynthesis via salvage pathway; AMP from ADP: step 1/1. Its function is as follows. Catalyzes the reversible transfer of the terminal phosphate group between ATP and AMP. Plays an important role in cellular energy homeostasis and in adenine nucleotide metabolism. This is Adenylate kinase from Baumannia cicadellinicola subsp. Homalodisca coagulata.